A 746-amino-acid chain; its full sequence is PAN2-PAN3 deadenylation complex subunit pan3 (746 aa).

The C3H1-type zinc-finger motif lies at 7 to 35 (PKNQKQCKNIALHGYCRNSDKCEFSHELT). Residues 64–97 (QQQQQQQNSNGNGSNNTATSNNPIISPNSNIASP) are compositionally biased toward low complexity. 3 disordered regions span residues 64–100 (QQQQ…PLKK), 169–205 (DDQH…NMNN), and 219–275 (NASP…PSLQ). Residues 196 to 205 (NNGIDPNMNN) are compositionally biased toward polar residues. Low complexity predominate over residues 221-275 (SPQSYQQQFQQPNPSPQSSSQQQQQQQQQQQQAVYQQQQQQQPSSQPLAQNPSLQ). Positions 351 to 610 (DPNDPRIKNI…NIDEVVLMIS (260 aa)) are pseudokinase domain. ATP contacts are provided by residues arginine 407, 457-464 (EFFPGSET), and 509-510 (SK). Residues 611–649 (GRLLQENNYLHTYTDDLETELSKEYENGRLFRLVTKLGF) adopt a coiled-coil conformation. Residues 650–746 (INERPLYDMD…SELVSQKSHI (97 aa)) form a knob domain region.

It belongs to the protein kinase superfamily. PAN3 family. Homodimer. Forms a heterotrimer with a catalytic subunit PAN2 to form the poly(A)-nuclease (PAN) deadenylation complex. Interacts (via PAM-2 motif) with poly(A)-binding protein (via PABC domain), conferring substrate specificity of the enzyme complex.

It is found in the cytoplasm. In terms of biological role, regulatory subunit of the poly(A)-nuclease (PAN) deadenylation complex, one of two cytoplasmic mRNA deadenylases involved in mRNA turnover. PAN specifically shortens poly(A) tails of RNA and the activity is stimulated by poly(A)-binding protein (PABP). PAN deadenylation is followed by rapid degradation of the shortened mRNA tails by the CCR4-NOT complex. Deadenylated mRNAs are then degraded by two alternative mechanisms, namely exosome-mediated 3'-5' exonucleolytic degradation, or deadenylation-dependent mRNA decaping and subsequent 5'-3' exonucleolytic degradation by XRN1. PAN3 acts as a positive regulator for PAN activity, recruiting the catalytic subunit PAN2 to mRNA via its interaction with RNA and PABP. This Dictyostelium discoideum (Social amoeba) protein is PAN2-PAN3 deadenylation complex subunit pan3.